Reading from the N-terminus, the 399-residue chain is MNPVEKARQKLKKKNAAKRNNLTKILNMESTPEAQSVDNISQSQNDLTKSLTTVPKPKSSISTKILKRKELTISDLIKLIFTCDVHEDDIYIVGGLSKSDFTIKKILYKNANVPKILYTNNYVYVHTDDHKIGELASERSKSRLMQTLSLVDINKYDQESQMILSSMKQACEIVRKKQIPLAQENIDTNVERILSGENSSASSVTSEECEQDVMDEQSAEDNEEVSQEIIDALNAVVAPVLENDMDSTESGDIGTELISMFAGQIMEYFSSPLAKENMPEDVLNEEMELLDELEAKVYKIMTASTNKVTKLLLQSAHNYYQGFSDNEKRNLLSRINDLLNPLIEYADKLIDNFCQLYGPADQPITAIGKVLNIAKKIVSVNGLNTNLKLKNGKFILNAE.

Residues 197–206 (ENSSASSVTS) show a composition bias toward polar residues. Residues 197 to 224 (ENSSASSVTSEECEQDVMDEQSAEDNEE) form a disordered region. Residues 207-224 (EECEQDVMDEQSAEDNEE) are compositionally biased toward acidic residues.

This is an uncharacterized protein from Diadromus pulchellus (Parasitic wasp).